The chain runs to 247 residues: Carboxy-S-adenosyl-L-methionine synthase (247 aa).

S-adenosyl-L-methionine is bound by residues Y39, 64–66 (GCS), 89–90 (DN), 117–118 (DI), N132, and R199.

The protein belongs to the class I-like SAM-binding methyltransferase superfamily. Cx-SAM synthase family. Homodimer.

The catalysed reaction is prephenate + S-adenosyl-L-methionine = carboxy-S-adenosyl-L-methionine + 3-phenylpyruvate + H2O. Catalyzes the conversion of S-adenosyl-L-methionine (SAM) to carboxy-S-adenosyl-L-methionine (Cx-SAM). The polypeptide is Carboxy-S-adenosyl-L-methionine synthase (Escherichia coli O7:K1 (strain IAI39 / ExPEC)).